The chain runs to 194 residues: Probable thymidylate kinase (194 aa).

9 to 16 serves as a coordination point for ATP; the sequence is GIDGVGKS.

It belongs to the thymidylate kinase family.

It carries out the reaction dTMP + ATP = dTDP + ADP. The chain is Probable thymidylate kinase from Methanopyrus kandleri (strain AV19 / DSM 6324 / JCM 9639 / NBRC 100938).